Reading from the N-terminus, the 97-residue chain is UPF0213 protein YE0453 (97 aa).

The 76-residue stretch at 4–79 folds into the GIY-YIG domain; the sequence is SLWHLYLLRT…KQLSKQQKEK (76 aa).

This sequence belongs to the UPF0213 family.

This is UPF0213 protein YE0453 from Yersinia enterocolitica serotype O:8 / biotype 1B (strain NCTC 13174 / 8081).